The chain runs to 91 residues: Large ribosomal subunit protein uL29 (91 aa).

Residues 67-91 (AAPLAESSAPAKTKSRARKSKKEAL) form a disordered region. Residues 79–91 (TKSRARKSKKEAL) are compositionally biased toward basic residues.

This sequence belongs to the universal ribosomal protein uL29 family.

This is Large ribosomal subunit protein uL29 from Acidobacterium capsulatum (strain ATCC 51196 / DSM 11244 / BCRC 80197 / JCM 7670 / NBRC 15755 / NCIMB 13165 / 161).